Consider the following 364-residue polypeptide: Methylthioribose-1-phosphate isomerase (364 aa).

Substrate is bound by residues 53–55, Arg90, and Gln200; that span reads RGA. The active-site Proton donor is the Asp241. A substrate-binding site is contributed by 251-252; sequence NK.

The protein belongs to the eIF-2B alpha/beta/delta subunits family. MtnA subfamily.

It carries out the reaction 5-(methylsulfanyl)-alpha-D-ribose 1-phosphate = 5-(methylsulfanyl)-D-ribulose 1-phosphate. Its pathway is amino-acid biosynthesis; L-methionine biosynthesis via salvage pathway; L-methionine from S-methyl-5-thio-alpha-D-ribose 1-phosphate: step 1/6. Its function is as follows. Catalyzes the interconversion of methylthioribose-1-phosphate (MTR-1-P) into methylthioribulose-1-phosphate (MTRu-1-P). The protein is Methylthioribose-1-phosphate isomerase of Methylobacterium nodulans (strain LMG 21967 / CNCM I-2342 / ORS 2060).